The chain runs to 86 residues: U1-theraphotoxin-Pc1a (86 aa).

Residues 1–21 form the signal peptide; the sequence is MMRVLIVTAVFTFFLVLTSSG. The propeptide occupies 22–49; that stretch reads HDEDNEQRNILEGMFLDRAIETPKGLEE. Intrachain disulfides connect Cys53/Cys70, Cys60/Cys75, and Cys69/Cys80. Residue Val84 is modified to Valine amide.

In terms of tissue distribution, expressed by the venom gland.

It localises to the secreted. Functionally, possesses strong antiplasmodial activity against the intra-erythrocyte stage of P.falciparum in vitro. IC(50) for inhibiting P.falciparum growth is 1.59 uM. Interacts with infected and healthy erythrocytes. Does not lyse erythrocytes, is not cytotoxic to nucleated mammalian cells, and does not inhibit neuromuscular function. Has neither antibacterial nor antifungal activity. The sequence is that of U1-theraphotoxin-Pc1a from Psalmopoeus cambridgei (Trinidad chevron tarantula).